The primary structure comprises 329 residues: Phenylalanine--tRNA ligase alpha subunit (329 aa).

This sequence belongs to the class-II aminoacyl-tRNA synthetase family. Phe-tRNA synthetase alpha subunit type 1 subfamily. Tetramer of two alpha and two beta subunits. Mg(2+) serves as cofactor.

The protein resides in the cytoplasm. It carries out the reaction tRNA(Phe) + L-phenylalanine + ATP = L-phenylalanyl-tRNA(Phe) + AMP + diphosphate + H(+). In Buchnera aphidicola subsp. Acyrthosiphon pisum (strain APS) (Acyrthosiphon pisum symbiotic bacterium), this protein is Phenylalanine--tRNA ligase alpha subunit (pheS).